Here is a 258-residue protein sequence, read N- to C-terminus: Imidazole glycerol phosphate synthase subunit HisF (258 aa).

Active-site residues include aspartate 11 and aspartate 130.

Belongs to the HisA/HisF family. As to quaternary structure, heterodimer of HisH and HisF.

The protein resides in the cytoplasm. It catalyses the reaction 5-[(5-phospho-1-deoxy-D-ribulos-1-ylimino)methylamino]-1-(5-phospho-beta-D-ribosyl)imidazole-4-carboxamide + L-glutamine = D-erythro-1-(imidazol-4-yl)glycerol 3-phosphate + 5-amino-1-(5-phospho-beta-D-ribosyl)imidazole-4-carboxamide + L-glutamate + H(+). The protein operates within amino-acid biosynthesis; L-histidine biosynthesis; L-histidine from 5-phospho-alpha-D-ribose 1-diphosphate: step 5/9. Functionally, IGPS catalyzes the conversion of PRFAR and glutamine to IGP, AICAR and glutamate. The HisF subunit catalyzes the cyclization activity that produces IGP and AICAR from PRFAR using the ammonia provided by the HisH subunit. This Edwardsiella ictaluri (strain 93-146) protein is Imidazole glycerol phosphate synthase subunit HisF.